We begin with the raw amino-acid sequence, 355 residues long: Guanine nucleotide-binding protein G(i) subunit alpha-2 (355 aa).

Gly-2 carries the N-myristoyl glycine lipid modification. Cys-3 is lipidated: S-palmitoyl cysteine. One can recognise a G-alpha domain in the interval 32–355 (REVKLLLLGA…KNNLKDCGLF (324 aa)). The G1 motif stretch occupies residues 35–48 (KLLLLGAGESGKST). Residues 40–47 (GAGESGKS), 176–182 (LRTRVKT), 201–205 (DVGGQ), 270–273 (NKKD), and Ala-327 contribute to the GTP site. Ser-47 provides a ligand contact to Mg(2+). The tract at residues 174–182 (DVLRTRVKT) is G2 motif. Arg-179 carries the ADP-ribosylarginine; by cholera toxin modification. Thr-182 is a binding site for Mg(2+). The G3 motif stretch occupies residues 197 to 206 (FKMFDVGGQR). Residue Gln-205 is modified to Deamidated glutamine; by Photorhabdus PAU_02230. Residues 266 to 273 (ILFLNKKD) are G4 motif. Positions 325–330 (TCATDT) are G5 motif. An ADP-ribosylcysteine; by pertussis toxin modification is found at Cys-352.

It belongs to the G-alpha family. G(i/o/t/z) subfamily. G proteins are composed of 3 units; alpha, beta and gamma. The alpha chain contains the guanine nucleotide binding site. In this context, interacts with GNB2. Interacts with GPSM1. Interacts with RGS12 and RGS14. Interacts with UNC5B. Interacts (inactive GDP-bound form) with NUCB1 (via GBA motif); the interaction leads to activation of GNAI3. Interacts (inactive GDP-bound form) with CCDC88C/DAPLE (via GBA motif). Interacts (inactive GDP-bound form) with CCDC8A/GIV (via GBA motif). Interacts with CXCR1 and CXCR2. (Microbial infection) Deamidated at Gln-205 by Photorhabdus asymbiotica toxin PAU_02230, blocking GTP hydrolysis of heterotrimeric GNAQ or GNA11 and G-alphai (GNAI1, GNAI2 or GNAI3) proteins, thereby activating RhoA.

Its subcellular location is the cytoplasm. The protein localises to the cytoskeleton. It localises to the microtubule organizing center. The protein resides in the centrosome. It is found in the cell membrane. Its subcellular location is the membrane. Its function is as follows. Guanine nucleotide-binding proteins (G proteins) are involved as modulators or transducers in various transmembrane signaling systems. The G(i) proteins are involved in hormonal regulation of adenylate cyclase: they inhibit the cyclase in response to beta-adrenergic stimuli. May play a role in cell division. In terms of biological role, regulates the cell surface density of dopamine receptors DRD2 by sequestrating them as an intracellular pool. The polypeptide is Guanine nucleotide-binding protein G(i) subunit alpha-2 (GNAI2) (Homo sapiens (Human)).